Reading from the N-terminus, the 426-residue chain is Glutamyl-tRNA reductase (426 aa).

Substrate contacts are provided by residues 49 to 52 (TCNR), S101, 106 to 108 (EPQ), and Q112. C50 acts as the Nucleophile in catalysis. 181 to 186 (GAGETI) is an NADP(+) binding site. Residues 404–426 (DRLFPEKPGLPTSPHSYPDREDR) are disordered.

The protein belongs to the glutamyl-tRNA reductase family. In terms of assembly, homodimer.

The catalysed reaction is (S)-4-amino-5-oxopentanoate + tRNA(Glu) + NADP(+) = L-glutamyl-tRNA(Glu) + NADPH + H(+). Its pathway is porphyrin-containing compound metabolism; protoporphyrin-IX biosynthesis; 5-aminolevulinate from L-glutamyl-tRNA(Glu): step 1/2. In terms of biological role, catalyzes the NADPH-dependent reduction of glutamyl-tRNA(Glu) to glutamate 1-semialdehyde (GSA). The chain is Glutamyl-tRNA reductase from Xanthomonas campestris pv. phaseoli.